The sequence spans 166 residues: Interferon gamma (166 aa).

The signal sequence occupies residues 1 to 23; sequence MKYTSYFLALQLCLLLGFSGSYG. The residue at position 24 (Q24) is a Pyrrolidone carboxylic acid. N39 and N106 each carry an N-linked (GlcNAc...) asparagine glycan.

The protein belongs to the type II (or gamma) interferon family. Homodimer. Interacts with IFNGR1 (via extracellular domain); this interaction promotes IFNGR1 dimerization. In terms of tissue distribution, released primarily from activated T lymphocytes.

It is found in the secreted. Its function is as follows. Type II interferon produced by immune cells such as T-cells and NK cells that plays crucial roles in antimicrobial, antiviral, and antitumor responses by activating effector immune cells and enhancing antigen presentation. Primarily signals through the JAK-STAT pathway after interaction with its receptor IFNGR1 to affect gene regulation. Upon IFNG binding, IFNGR1 intracellular domain opens out to allow association of downstream signaling components JAK2, JAK1 and STAT1, leading to STAT1 activation, nuclear translocation and transcription of IFNG-regulated genes. Many of the induced genes are transcription factors such as IRF1 that are able to further drive regulation of a next wave of transcription. Plays a role in class I antigen presentation pathway by inducing a replacement of catalytic proteasome subunits with immunoproteasome subunits. In turn, increases the quantity, quality, and repertoire of peptides for class I MHC loading. Increases the efficiency of peptide generation also by inducing the expression of activator PA28 that associates with the proteasome and alters its proteolytic cleavage preference. Up-regulates as well MHC II complexes on the cell surface by promoting expression of several key molecules such as cathepsins B/CTSB, H/CTSH, and L/CTSL. Participates in the regulation of hematopoietic stem cells during development and under homeostatic conditions by affecting their development, quiescence, and differentiation. In Moschus berezovskii (Chinese forest musk deer), this protein is Interferon gamma (IFNG).